A 385-amino-acid chain; its full sequence is 8-amino-7-oxononanoate synthase (385 aa).

Arginine 21 is a binding site for substrate. 108-109 provides a ligand contact to pyridoxal 5'-phosphate; that stretch reads GF. Histidine 133 is a substrate binding site. Positions 179, 207, and 233 each coordinate pyridoxal 5'-phosphate. Lysine 236 bears the N6-(pyridoxal phosphate)lysine mark. Threonine 352 is a substrate binding site.

The protein belongs to the class-II pyridoxal-phosphate-dependent aminotransferase family. BioF subfamily. In terms of assembly, homodimer. Pyridoxal 5'-phosphate serves as cofactor.

The enzyme catalyses 6-carboxyhexanoyl-[ACP] + L-alanine + H(+) = (8S)-8-amino-7-oxononanoate + holo-[ACP] + CO2. It functions in the pathway cofactor biosynthesis; biotin biosynthesis. Functionally, catalyzes the decarboxylative condensation of pimeloyl-[acyl-carrier protein] and L-alanine to produce 8-amino-7-oxononanoate (AON), [acyl-carrier protein], and carbon dioxide. This chain is 8-amino-7-oxononanoate synthase, found in Salmonella agona (strain SL483).